The chain runs to 431 residues: D-inositol 3-phosphate glycosyltransferase (431 aa).

Position 21 (His21) interacts with 1D-myo-inositol 3-phosphate. Residues 27–28 and Gly35 contribute to the UDP-N-acetyl-alpha-D-glucosamine site; that span reads QP. 1D-myo-inositol 3-phosphate is bound by residues 32–37, Arg90, Tyr123, Thr147, and Arg167; that span reads DAGGMN. Arg241, Lys246, and Gln307 together coordinate UDP-N-acetyl-alpha-D-glucosamine. Mg(2+)-binding residues include Tyr316, Arg317, and Ala319. Residues Glu329 and Glu337 each contribute to the UDP-N-acetyl-alpha-D-glucosamine site. Thr343 is a Mg(2+) binding site.

This sequence belongs to the glycosyltransferase group 1 family. MshA subfamily. In terms of assembly, homodimer.

The enzyme catalyses 1D-myo-inositol 3-phosphate + UDP-N-acetyl-alpha-D-glucosamine = 1D-myo-inositol 2-acetamido-2-deoxy-alpha-D-glucopyranoside 3-phosphate + UDP + H(+). Its function is as follows. Catalyzes the transfer of a N-acetyl-glucosamine moiety to 1D-myo-inositol 3-phosphate to produce 1D-myo-inositol 2-acetamido-2-deoxy-glucopyranoside 3-phosphate in the mycothiol biosynthesis pathway. The sequence is that of D-inositol 3-phosphate glycosyltransferase from Saccharomonospora viridis (strain ATCC 15386 / DSM 43017 / JCM 3036 / CCUG 5913 / NBRC 12207 / NCIMB 9602 / P101) (Thermoactinomyces viridis).